Reading from the N-terminus, the 92-residue chain is Acylphosphatase (92 aa).

In terms of domain architecture, Acylphosphatase-like spans 5–92 (ATAAYVYGVV…TDYKGFTIRY (88 aa)). Active-site residues include arginine 20 and asparagine 38.

This sequence belongs to the acylphosphatase family.

The enzyme catalyses an acyl phosphate + H2O = a carboxylate + phosphate + H(+). The chain is Acylphosphatase (acyP) from Pectobacterium atrosepticum (strain SCRI 1043 / ATCC BAA-672) (Erwinia carotovora subsp. atroseptica).